Consider the following 124-residue polypeptide: Large ribosomal subunit protein uL22 (124 aa).

It belongs to the universal ribosomal protein uL22 family. As to quaternary structure, part of the 50S ribosomal subunit.

In terms of biological role, this protein binds specifically to 23S rRNA; its binding is stimulated by other ribosomal proteins, e.g. L4, L17, and L20. It is important during the early stages of 50S assembly. It makes multiple contacts with different domains of the 23S rRNA in the assembled 50S subunit and ribosome. Functionally, the globular domain of the protein is located near the polypeptide exit tunnel on the outside of the subunit, while an extended beta-hairpin is found that lines the wall of the exit tunnel in the center of the 70S ribosome. The polypeptide is Large ribosomal subunit protein uL22 (Macrococcus caseolyticus (strain JCSC5402) (Macrococcoides caseolyticum)).